The primary structure comprises 595 residues: Protein kinase C iota type (595 aa).

The span at 1 to 12 (MPTQRDSSTMSH) shows a compositional bias: polar residues. Residues 1-21 (MPTQRDSSTMSHTVACGGGGD) form a disordered region. P2 is modified (N-acetylproline). Residues 2 to 28 (PTQRDSSTMSHTVACGGGGDHSHQVRV) are required for interaction with RAB2. Residues 2–252 (PTQRDSSTMS…KASSSLGLQD (251 aa)) form a regulatory domain region. Position 3 is a phosphothreonine (T3). A phosphoserine mark is found at S7 and S8. A Phosphothreonine modification is found at T9. The PB1 domain occupies 25–108 (QVRVKAYYRG…SELLIHVFPC (84 aa)). The interaction with PARD6A stretch occupies residues 72–91 (DEEGDPCTVSSQLELEEAFR). A Pseudosubstrate motif is present at residues 125–134 (YRRGARRWRK). The Phorbol-ester/DAG-type zinc finger occupies 140–190 (GHTFQAKRFNRRAHCAICTDRIWGLGRQGYKCINCKLLVHKKCHKLVTIEC). The region spanning 253-521 (FDLLRVIGRG…FADIQGHPFF (269 aa)) is the Protein kinase domain. 259-267 (IGRGSYAKV) is an ATP binding site. Residues Y264 and Y279 each carry the phosphotyrosine; by SRC modification. K282 contacts ATP. Y333 carries the post-translational modification Phosphotyrosine; by SRC. The Proton acceptor role is filled by D377. Phosphothreonine occurs at positions 411 and 563. Residues 522 to 593 (RNVDWDMMEQ…INPLLMSAEE (72 aa)) form the AGC-kinase C-terminal domain.

The protein belongs to the protein kinase superfamily. AGC Ser/Thr protein kinase family. PKC subfamily. As to quaternary structure, forms a complex with SQSTM1 and MP2K5. Interacts directly with SQSTM1. Interacts with IKBKB. Interacts with PARD6A, PARD6B and PARD6G. Part of a quaternary complex containing aPKC, PARD3, a PARD6 protein (PARD6A, PARD6B or PARD6G) and a GTPase protein (CDC42 or RAC1). Part of a complex with LLGL1 and PARD6B. Interacts with ADAP1/CENTA1. Interaction with SMG1, through the ZN-finger domain, activates the kinase activity. Interacts with CDK7. Forms a complex with RAB2A and GAPDH involved in recruitment onto the membrane of vesicular tubular clusters (VTCs). Interacts with ECT2 ('Thr-359' phosphorylated form). Interacts with VAMP2. Interacts with WDFY2 (via WD repeats 1-3). Post-translationally, phosphorylation at Thr-411 in the activation loop is not mandatory for activation. Upon neuronal growth factor (NGF) stimulation, phosphorylated by SRC at Tyr-264, Tyr-279 and Tyr-333. Phosphorylation on Tyr-264 facilitates binding to KPNB1/importin-beta regulating entry of PRKCI into the nucleus. Phosphorylation on Tyr-333 is important for NF-kappa-B stimulation. Phosphorylated at Thr-563 during the initial phase of long term potentiation.

Its subcellular location is the cytoplasm. It localises to the membrane. The protein resides in the endosome. The protein localises to the nucleus. It catalyses the reaction L-seryl-[protein] + ATP = O-phospho-L-seryl-[protein] + ADP + H(+). The enzyme catalyses L-threonyl-[protein] + ATP = O-phospho-L-threonyl-[protein] + ADP + H(+). Atypical PKCs (PRKCI and PRKCZ) exhibit an elevated basal enzymatic activity (that may be due to the interaction with SMG1 or SQSTM1) and are not regulated by diacylglycerol, phosphatidylserine, phorbol esters or calcium ions. Two specific sites, Thr-411 (activation loop of the kinase domain) and Thr-563 (turn motif), need to be phosphorylated for its full activation. Might also be a target for novel lipid activators that are elevated during nutrient-stimulated insulin secretion. Its function is as follows. Calcium- and diacylglycerol-independent serine/ threonine-protein kinase that plays a general protective role against apoptotic stimuli, is involved in NF-kappa-B activation, cell survival, differentiation and polarity, and contributes to the regulation of microtubule dynamics in the early secretory pathway. Is necessary for BCR-ABL oncogene-mediated resistance to apoptotic drug in leukemia cells, protecting leukemia cells against drug-induced apoptosis. In cultured neurons, prevents amyloid beta protein-induced apoptosis by interrupting cell death process at a very early step. In glioblastoma cells, may function downstream of phosphatidylinositol 3-kinase (PI3K) and PDPK1 in the promotion of cell survival by phosphorylating and inhibiting the pro-apoptotic factor BAD. Can form a protein complex in non-small cell lung cancer (NSCLC) cells with PARD6A and ECT2 and regulate ECT2 oncogenic activity by phosphorylation, which in turn promotes transformed growth and invasion. In response to nerve growth factor (NGF), acts downstream of SRC to phosphorylate and activate IRAK1, allowing the subsequent activation of NF-kappa-B and neuronal cell survival. Functions in the organization of the apical domain in epithelial cells by phosphorylating EZR. This step is crucial for activation and normal distribution of EZR at the early stages of intestinal epithelial cell differentiation. Forms a protein complex with LLGL1 and PARD6B independently of PARD3 to regulate epithelial cell polarity. Plays a role in microtubule dynamics in the early secretory pathway through interaction with RAB2A and GAPDH and recruitment to vesicular tubular clusters (VTCs). In human coronary artery endothelial cells (HCAEC), is activated by saturated fatty acids and mediates lipid-induced apoptosis. Downstream of PI3K is required for insulin-stimulated glucose transport. Activates RAB4A and promotes its association with KIF3A which is required for the insulin-induced SLC2A4/GLUT4 translocation in adipocytes. Is essential in early embryogenesis and development of differentiating photoreceptors by playing a role in the establishment of epithelial and neuronal polarity. Involved in early synaptic long term potentiation phase in CA1 hippocampal cells and short term memory formation. This is Protein kinase C iota type (Prkci) from Mus musculus (Mouse).